Here is a 211-residue protein sequence, read N- to C-terminus: Large ribosomal subunit protein uL4 (211 aa).

Residues 41–87 (QAHARQGTASTLTRSEVRGGGRKPYKQKGTGRARQGSIRTPLRPGGG) are disordered. Positions 60 to 71 (GGRKPYKQKGTG) are enriched in basic residues.

The protein belongs to the universal ribosomal protein uL4 family. Part of the 50S ribosomal subunit.

Its function is as follows. One of the primary rRNA binding proteins, this protein initially binds near the 5'-end of the 23S rRNA. It is important during the early stages of 50S assembly. It makes multiple contacts with different domains of the 23S rRNA in the assembled 50S subunit and ribosome. Forms part of the polypeptide exit tunnel. The chain is Large ribosomal subunit protein uL4 from Parasynechococcus marenigrum (strain WH8102).